Reading from the N-terminus, the 192-residue chain is Ras-like protein 2 (192 aa).

12–19 lines the GTP pocket; the sequence is GGGGVGKS. The short motif at 34–42 is the Effector region element; that stretch reads YDPTIEDSY. The S-palmitoyl cysteine moiety is linked to residue C46. Residues 59 to 63 and 118 to 121 each bind GTP; these read DTAGQ and NKCD. Residues C120 and C147 are each lipidated (S-palmitoyl cysteine). Residue C189 is modified to Cysteine methyl ester. Residue C189 is the site of S-farnesyl cysteine attachment. A propeptide spans 190–192 (removed in mature form); the sequence is CLM.

It belongs to the small GTPase superfamily. Ras family. In terms of assembly, interacts with hzg.

It is found in the cell membrane. The catalysed reaction is GTP + H2O = GDP + phosphate + H(+). Alternates between an inactive form bound to GDP and an active form bound to GTP. Activated by a guanine nucleotide-exchange factor (GEF) and inactivated by a GTPase-activating protein (GAP). May be involved in endocytic processes and/or other transport pathways mediated by vesicle trafficking. May interact functionally with ROP protein. Ras proteins bind GDP/GTP and possess intrinsic GTPase activity. This chain is Ras-like protein 2 (Ras64B), found in Drosophila melanogaster (Fruit fly).